Consider the following 212-residue polypeptide: Large ribosomal subunit protein uL3 (212 aa).

A disordered region spans residues 136-155 (THGNSVSHRVLGSTGQNQTP). N5-methylglutamine is present on glutamine 153.

This sequence belongs to the universal ribosomal protein uL3 family. Part of the 50S ribosomal subunit. Forms a cluster with proteins L14 and L19. Post-translationally, methylated by PrmB.

In terms of biological role, one of the primary rRNA binding proteins, it binds directly near the 3'-end of the 23S rRNA, where it nucleates assembly of the 50S subunit. The protein is Large ribosomal subunit protein uL3 of Acinetobacter baumannii (strain AB307-0294).